The primary structure comprises 304 residues: Galactose 1-dehydrogenase (304 aa).

This sequence belongs to the Gfo/Idh/MocA family. Homodimer.

Its subcellular location is the cytoplasm. The catalysed reaction is D-galactose + NAD(+) = D-galactono-1,4-lactone + NADH + H(+). Its pathway is carbohydrate metabolism; galactose metabolism. Catalyzes the dehydrogenation of D-galactose by either NAD(+) or NADP(+). Oxidizes following sugars in decreasing order: D-fucose &gt; D-galactose &gt; L-arabinose &gt; 2-deoxy-D-galactose &gt;&gt; 4-deoxy-D-galactose &gt; 2-deoxy-2-amino-D-galactose. The sequence is that of Galactose 1-dehydrogenase (gal) from Pseudomonas fluorescens.